Reading from the N-terminus, the 509-residue chain is Maturase K (509 aa).

It belongs to the intron maturase 2 family. MatK subfamily.

The protein resides in the plastid. Its subcellular location is the chloroplast. Usually encoded in the trnK tRNA gene intron. Probably assists in splicing its own and other chloroplast group II introns. The polypeptide is Maturase K (Vatairea macrocarpa).